A 363-amino-acid polypeptide reads, in one-letter code: Peroxisomal (S)-2-hydroxyacid oxidase GLO3 (363 aa).

The 357-residue stretch at 1–357 folds into the FMN hydroxy acid dehydrogenase domain; the sequence is MDQIVNVDEF…TRNHVRTENE (357 aa). FMN contacts are provided by residues 78–80, Ser-107, 128–130, and Thr-156; these read PTG and QIY. A 2-oxocarboxylate is bound at residue Tyr-130. Arg-165 contributes to the a 2-oxocarboxylate binding site. Positions 228 and 250 each coordinate FMN. His-252 functions as the Proton acceptor in the catalytic mechanism. Arg-255 serves as a coordination point for a 2-oxocarboxylate. FMN is bound by residues 283 to 287 and 306 to 307; these read DGGVR and GR. The Microbody targeting signal motif lies at 361-363; it reads SML.

Belongs to the FMN-dependent alpha-hydroxy acid dehydrogenase family. In terms of assembly, homotetramer. Requires FMN as cofactor.

It is found in the peroxisome. It carries out the reaction a (2S)-2-hydroxycarboxylate + O2 = a 2-oxocarboxylate + H2O2. It catalyses the reaction 2-hydroxy-4-methylpentanoate + O2 = 4-methyl-2-oxopentanoate + H2O2. The enzyme catalyses 2-hydroxyhexanoate + O2 = 2-oxohexanoate + H2O2. The catalysed reaction is 2-hydroxyoctanoate + O2 = 2-oxooctanoate + H2O2. Functionally, oxidase that catalyzes the oxidation of a broad range of 2-hydroxyacids to the corresponding 2-oxoacids, with a reduction of O2 to H2O2. Displays the highest activity with leucic acid (2-hydroxy-4-methylpentanoate) and has intermediate activity with 2-hydroxyhexanoate and 2-hydroxyoctanote. Shows lower activity with 2-hydroxydodecanoate, valic acid, and isoleucic acid and extremely low activity with glycolate and L-lactate. Cannot use 2-hydroxyhexadecanoate or D-lactate as substrates. May be involved in the conversion or degradation of 2-hydroxyacids produced during the metabolism of fatty acids or amino acids. This Arabidopsis thaliana (Mouse-ear cress) protein is Peroxisomal (S)-2-hydroxyacid oxidase GLO3 (GLO3).